Consider the following 429-residue polypeptide: Phosphoglucosamine mutase (429 aa).

Catalysis depends on S96, which acts as the Phosphoserine intermediate. The Mg(2+) site is built by S96, D230, D232, and D234. S96 carries the post-translational modification Phosphoserine.

This sequence belongs to the phosphohexose mutase family. The cofactor is Mg(2+). Activated by phosphorylation.

The enzyme catalyses alpha-D-glucosamine 1-phosphate = D-glucosamine 6-phosphate. In terms of biological role, catalyzes the conversion of glucosamine-6-phosphate to glucosamine-1-phosphate. The polypeptide is Phosphoglucosamine mutase (Thermotoga maritima (strain ATCC 43589 / DSM 3109 / JCM 10099 / NBRC 100826 / MSB8)).